A 299-amino-acid chain; its full sequence is Porphobilinogen deaminase (299 aa).

C234 is subject to S-(dipyrrolylmethanemethyl)cysteine.

Belongs to the HMBS family. Monomer. Dipyrromethane is required as a cofactor.

The enzyme catalyses 4 porphobilinogen + H2O = hydroxymethylbilane + 4 NH4(+). Its pathway is porphyrin-containing compound metabolism; protoporphyrin-IX biosynthesis; coproporphyrinogen-III from 5-aminolevulinate: step 2/4. In terms of biological role, tetrapolymerization of the monopyrrole PBG into the hydroxymethylbilane pre-uroporphyrinogen in several discrete steps. The sequence is that of Porphobilinogen deaminase from Corynebacterium efficiens (strain DSM 44549 / YS-314 / AJ 12310 / JCM 11189 / NBRC 100395).